Consider the following 149-residue polypeptide: 16.9 kDa class I heat shock protein 3 (149 aa).

Residues 35–149 (DTAAFANARV…PEVKAIEISG (115 aa)) enclose the sHSP domain.

This sequence belongs to the small heat shock protein (HSP20) family. As to quaternary structure, may form oligomeric structures.

It is found in the cytoplasm. This Oryza sativa subsp. japonica (Rice) protein is 16.9 kDa class I heat shock protein 3 (HSP16.9C).